Reading from the N-terminus, the 119-residue chain is Large ribosomal subunit protein bL20 (119 aa).

Belongs to the bacterial ribosomal protein bL20 family.

In terms of biological role, binds directly to 23S ribosomal RNA and is necessary for the in vitro assembly process of the 50S ribosomal subunit. It is not involved in the protein synthesizing functions of that subunit. This Acidovorax sp. (strain JS42) protein is Large ribosomal subunit protein bL20.